Consider the following 244-residue polypeptide: Cytochrome c1 (244 aa).

The first 19 residues, 1-19 (MRKLILATFLLLAPTALLA), serve as a signal peptide directing secretion. Heme c contacts are provided by Cys-50, Cys-53, and His-54. A helical transmembrane segment spans residues 220-240 (YVLLFLGFLFILAYLLKKEYW).

In terms of assembly, the main subunits of complex b-c1 are: cytochrome b, cytochrome c1 and the Rieske protein. Post-translationally, binds 1 heme c group covalently per subunit.

It is found in the cell membrane. Functionally, component of the ubiquinol-cytochrome c reductase complex (complex III or cytochrome b-c1 complex), which is a respiratory chain that generates an electrochemical potential coupled to ATP synthesis. c1 functions as an electron donor to cytochrome c. In Allochromatium vinosum (strain ATCC 17899 / DSM 180 / NBRC 103801 / NCIMB 10441 / D) (Chromatium vinosum), this protein is Cytochrome c1 (petC).